A 318-amino-acid chain; its full sequence is Glycine--tRNA ligase alpha subunit (318 aa).

Belongs to the class-II aminoacyl-tRNA synthetase family. Tetramer of two alpha and two beta subunits.

The protein localises to the cytoplasm. The catalysed reaction is tRNA(Gly) + glycine + ATP = glycyl-tRNA(Gly) + AMP + diphosphate. This chain is Glycine--tRNA ligase alpha subunit, found in Chelativorans sp. (strain BNC1).